The sequence spans 293 residues: Nucleotide-binding protein Bcer98_3698 (293 aa).

Position 14–21 (14–21 (GMSGAGKT)) interacts with ATP. 65-68 (DLRG) contributes to the GTP binding site.

It belongs to the RapZ-like family.

Its function is as follows. Displays ATPase and GTPase activities. This chain is Nucleotide-binding protein Bcer98_3698, found in Bacillus cytotoxicus (strain DSM 22905 / CIP 110041 / 391-98 / NVH 391-98).